We begin with the raw amino-acid sequence, 261 residues long: Proteasome subunit alpha type-4 (261 aa).

2 positions are modified to phosphoserine: serine 13 and serine 75. Residue lysine 127 is modified to N6-acetyllysine. Serine 173 carries the phosphoserine modification. Lysine 176 is modified (N6-acetyllysine). Positions histidine 240 to lysine 261 are disordered.

It belongs to the peptidase T1A family. In terms of assembly, the 26S proteasome consists of a 20S proteasome core and two 19S regulatory subunits. The 20S proteasome core is a barrel-shaped complex made of 28 subunits that are arranged in four stacked rings. The two outer rings are each formed by seven alpha subunits, and the two inner rings are formed by seven beta subunits. The proteolytic activity is exerted by three beta-subunits PSMB5, PSMB6 and PSMB7.

It is found in the cytoplasm. The protein resides in the nucleus. In terms of biological role, component of the 20S core proteasome complex involved in the proteolytic degradation of most intracellular proteins. This complex plays numerous essential roles within the cell by associating with different regulatory particles. Associated with two 19S regulatory particles, forms the 26S proteasome and thus participates in the ATP-dependent degradation of ubiquitinated proteins. The 26S proteasome plays a key role in the maintenance of protein homeostasis by removing misfolded or damaged proteins that could impair cellular functions, and by removing proteins whose functions are no longer required. Associated with the PA200 or PA28, the 20S proteasome mediates ubiquitin-independent protein degradation. This type of proteolysis is required in several pathways including spermatogenesis (20S-PA200 complex) or generation of a subset of MHC class I-presented antigenic peptides (20S-PA28 complex). This Macaca fascicularis (Crab-eating macaque) protein is Proteasome subunit alpha type-4 (PSMA4).